The primary structure comprises 112 residues: Nucleoid-associated protein Pfl01_1806 (112 aa).

The protein belongs to the YbaB/EbfC family. Homodimer.

The protein resides in the cytoplasm. It localises to the nucleoid. Its function is as follows. Binds to DNA and alters its conformation. May be involved in regulation of gene expression, nucleoid organization and DNA protection. This Pseudomonas fluorescens (strain Pf0-1) protein is Nucleoid-associated protein Pfl01_1806.